Reading from the N-terminus, the 167-residue chain is Ribosome maturation factor RimM (167 aa).

Positions 92–166 constitute a PRC barrel domain; it reads DGVYYYRELL…EVRVELMEGL (75 aa).

This sequence belongs to the RimM family. As to quaternary structure, binds ribosomal protein uS19.

The protein localises to the cytoplasm. Functionally, an accessory protein needed during the final step in the assembly of 30S ribosomal subunit, possibly for assembly of the head region. Essential for efficient processing of 16S rRNA. May be needed both before and after RbfA during the maturation of 16S rRNA. It has affinity for free ribosomal 30S subunits but not for 70S ribosomes. The sequence is that of Ribosome maturation factor RimM from Lactobacillus delbrueckii subsp. bulgaricus (strain ATCC 11842 / DSM 20081 / BCRC 10696 / JCM 1002 / NBRC 13953 / NCIMB 11778 / NCTC 12712 / WDCM 00102 / Lb 14).